The following is a 463-amino-acid chain: Chromosomal replication initiator protein DnaA (463 aa).

The interval 1–83 is domain I, interacts with DnaA modulators; sequence MSTNQIILTD…LQLFQHYNNT (83 aa). Positions 83-124 are domain II; the sequence is TIKSIEIITKELPGTTQTVIELPTKTFADIGSSELNSENIFS. Positions 125–343 are domain III, AAA+ region; the sequence is TLDVRFTFDN…GALNKVIAHS (219 aa). The ATP site is built by glycine 171, glycine 173, lysine 174, and threonine 175. The segment at 344–463 is domain IV, binds dsDNA; it reads NFTLKEITLE…INLLMKILQN (120 aa).

Belongs to the DnaA family. As to quaternary structure, oligomerizes as a right-handed, spiral filament on DNA at oriC.

It localises to the cytoplasm. Its function is as follows. Plays an essential role in the initiation and regulation of chromosomal replication. ATP-DnaA binds to the origin of replication (oriC) to initiate formation of the DNA replication initiation complex once per cell cycle. Binds the DnaA box (a 9 base pair repeat at the origin) and separates the double-stranded (ds)DNA. Forms a right-handed helical filament on oriC DNA; dsDNA binds to the exterior of the filament while single-stranded (ss)DNA is stabiized in the filament's interior. The ATP-DnaA-oriC complex binds and stabilizes one strand of the AT-rich DNA unwinding element (DUE), permitting loading of DNA polymerase. After initiation quickly degrades to an ADP-DnaA complex that is not apt for DNA replication. Binds acidic phospholipids. This is Chromosomal replication initiator protein DnaA from Rickettsia felis (strain ATCC VR-1525 / URRWXCal2) (Rickettsia azadi).